The chain runs to 88 residues: MMLQTAFTDLANPSYLNMGLALLLATIMVMILWAGMRLKSPAVFVIWALTSITLIFTFVTQFSFIWFWVMVMLSLLLISIVASIRYTL.

A run of 3 helical transmembrane segments spans residues 16–36 (LNMG…WAGM), 42–62 (AVFV…VTQF), and 64–84 (FIWF…VASI).

It is found in the host membrane. The polypeptide is Putative transmembrane protein ORF24 (Haloarcula hispanica (His1V)).